We begin with the raw amino-acid sequence, 146 residues long: 3-hydroxyacyl-[acyl-carrier-protein] dehydratase FabZ (146 aa).

Residue His46 is part of the active site.

The protein belongs to the thioester dehydratase family. FabZ subfamily.

It localises to the cytoplasm. It carries out the reaction a (3R)-hydroxyacyl-[ACP] = a (2E)-enoyl-[ACP] + H2O. Its function is as follows. Involved in unsaturated fatty acids biosynthesis. Catalyzes the dehydration of short chain beta-hydroxyacyl-ACPs and long chain saturated and unsaturated beta-hydroxyacyl-ACPs. The protein is 3-hydroxyacyl-[acyl-carrier-protein] dehydratase FabZ of Acinetobacter baumannii (strain ATCC 17978 / DSM 105126 / CIP 53.77 / LMG 1025 / NCDC KC755 / 5377).